Here is a 628-residue protein sequence, read N- to C-terminus: Forkhead box protein O (628 aa).

At T50 the chain carries Phosphothreonine; by PKB/AKT1. A Phosphoserine modification is found at S81. The fork-head DNA-binding region spans 101 to 207 (WGNLSYADLI…ETSRYEKRRG (107 aa)). 2 disordered regions span residues 188–210 (KSVR…GRAK) and 223–270 (GLND…SSCG). Position 196 is a phosphoserine; by PKB/AKT1 (S196). Composition is skewed to polar residues over residues 227-236 (ATPSPSSSVS) and 261-270 (RASSNASSCG). A Phosphoserine; by PKB/AKT1 modification is found at S264. S267, S268, and S273 each carry phosphoserine. Disordered stretches follow at residues 327 to 373 (SAAS…SLQP) and 398 to 451 (NSVT…QQQQ). Residues 334 to 343 (TQPPPPPYPA) are compositionally biased toward pro residues. A compositionally biased stretch (low complexity) spans 344 to 359 (PQQQQQQQPQQQQAYT). Residues 411-423 (SEPSSDSLNTYSN) show a composition bias toward polar residues. The span at 438 to 451 (QQQRQQQQQQQQQQ) shows a compositional bias: low complexity.

In terms of assembly, interacts with melt.

The protein localises to the cytoplasm. It localises to the nucleus. Functionally, transcription factor involved in the regulation of the insulin signaling pathway. Consistently activates both the downstream target Thor\d4EBP and the feedback control target InR. Involved in negative regulation of the cell cycle, modulating cell growth and proliferation. In response to cellular stresses, such as nutrient deprivation or increased levels of reactive oxygen species, foxo is activated and inhibits growth through the action of target genes such as Thor. Foxo activated in the adult fat body can regulate lifespan in adults; an insulin peptide itself may function as one secondary messenger of insulin-regulated aging. Also regulates Lip4, homolog of human acid lipases, thereby acting as a key modulator of lipid metabolism by insulin signaling and integrates insulin responses to glucose and lipid homeostasis. This chain is Forkhead box protein O, found in Drosophila willistoni (Fruit fly).